A 306-amino-acid polypeptide reads, in one-letter code: Glutathione transport system permease protein GsiC (306 aa).

At 1 to 8 the chain is on the cytoplasmic side; the sequence is MLNYVIKR. The chain crosses the membrane as a helical span at residues 9-29; the sequence is LLGLIPTLFIVSVLVFLFVHM. At 30-102 the chain is on the periplasmic side; the sequence is LPGDPARLIA…SRFMPTLWLT (73 aa). Residues 95–292 form the ABC transmembrane type-1 domain; it reads FMPTLWLTIT…LEFILINLVV (198 aa). Residues 103 to 123 form a helical membrane-spanning segment; that stretch reads ITSMVWAVIFGMAAGIIAAVW. Over 124-134 the chain is Cytoplasmic; the sequence is RNRWPDRLSMT. Residues 135-155 traverse the membrane as a helical segment; it reads IAVSGISFPAFALGMLLIQVF. Topologically, residues 156 to 168 are periplasmic; that stretch reads SVELGWLPTVGAD. A helical membrane pass occupies residues 169–189; that stretch reads SWQHYILPSLTLGAAVAAVMA. Residues 190–228 lie on the Cytoplasmic side of the membrane; the sequence is RFTRASFVDVLSEDYMRTARAKGVSETWVVLKHGLRNAM. The helical transmembrane segment at 229 to 249 threads the bilayer; the sequence is IPVVTMMGLQFGFLLGGSIVV. The Periplasmic segment spans residues 250–277; the sequence is EKVFNWPGLGRLLVDSVEMRDYPVIQAE. Residues 278–298 traverse the membrane as a helical segment; that stretch reads ILLFSLEFILINLVVDVLYAA. At 299 to 306 the chain is on the cytoplasmic side; sequence INPAIRYK.

This sequence belongs to the binding-protein-dependent transport system permease family. In terms of assembly, the complex is composed of two ATP-binding proteins (GsiA), two transmembrane proteins (GsiC and GsiD) and a solute-binding protein (GsiB).

Its subcellular location is the cell inner membrane. Its function is as follows. Part of the ABC transporter complex GsiABCD involved in glutathione import. Probably responsible for the translocation of the substrate across the membrane. This Escherichia coli O1:K1 / APEC protein is Glutathione transport system permease protein GsiC.